A 249-amino-acid chain; its full sequence is Vitamin B12 import ATP-binding protein BtuD (249 aa).

One can recognise an ABC transporter domain in the interval 5–233 (MQLQDVAETT…PNLAQAYGMN (229 aa)). Residue 33-40 (GPNGAGKS) participates in ATP binding.

It belongs to the ABC transporter superfamily. Vitamin B12 importer (TC 3.A.1.13.1) family. In terms of assembly, the complex is composed of two ATP-binding proteins (BtuD), two transmembrane proteins (BtuC) and a solute-binding protein (BtuF).

It is found in the cell inner membrane. It catalyses the reaction an R-cob(III)alamin(out) + ATP + H2O = an R-cob(III)alamin(in) + ADP + phosphate + H(+). Functionally, part of the ABC transporter complex BtuCDF involved in vitamin B12 import. Responsible for energy coupling to the transport system. The protein is Vitamin B12 import ATP-binding protein BtuD of Citrobacter koseri (strain ATCC BAA-895 / CDC 4225-83 / SGSC4696).